We begin with the raw amino-acid sequence, 421 residues long: Cell division protein FtsA (421 aa).

Belongs to the FtsA/MreB family. In terms of assembly, self-interacts. Interacts with FtsZ.

It is found in the cell membrane. Functionally, cell division protein that is involved in the assembly of the Z ring. May serve as a membrane anchor for the Z ring. This chain is Cell division protein FtsA, found in Buchnera aphidicola subsp. Baizongia pistaciae (strain Bp).